The following is a 34-amino-acid chain: Dermaseptin-S2 (34 aa).

It belongs to the frog skin active peptide (FSAP) family. Dermaseptin subfamily. As to expression, expressed by the skin glands.

The protein localises to the secreted. Its function is as follows. Potent antimicrobial peptide with activity against bacteria and protozoa. Also has activity against fungi. Probably acts by disturbing membrane functions with its amphipathic structure. The polypeptide is Dermaseptin-S2 (Phyllomedusa sauvagei (Sauvage's leaf frog)).